A 300-amino-acid chain; its full sequence is ETS homologous factor (300 aa).

One can recognise a PNT domain in the interval 29–115 (STCNVSSGFF…SNLQHLKWNG (87 aa)). Residues 179–204 (LPIAESPDTKKEQDHPTKPHTKKHNP) are disordered. Basic and acidic residues predominate over residues 185–195 (PDTKKEQDHPT). The ETS DNA-binding region spans 207–289 (THLWEFIRDI…DGRRLVYKFG (83 aa)).

Belongs to the ETS family.

The protein resides in the nucleus. In terms of biological role, transcriptional activator that may play a role in regulating epithelial cell differentiation and proliferation. May act as a repressor for a specific subset of ETS/AP-1-responsive genes, and as a modulator of the nuclear response to mitogen-activated protein kinase signaling cascades. Binds to DNA sequences containing the consensus nucleotide core sequence GGAA. Involved in regulation of TNFRSF10B/DR5 expression through Ets-binding sequences on the TNFRSF10B/DR5 promoter. This Bos taurus (Bovine) protein is ETS homologous factor (EHF).